We begin with the raw amino-acid sequence, 90 residues long: DNA-binding protein HU (90 aa).

The tract at residues 57-90 (ARKGVNPQTRKPITIPERKVPKFKPGKALKEKVK) is disordered.

This sequence belongs to the bacterial histone-like protein family.

Its function is as follows. Histone-like DNA-binding protein which is capable of wrapping DNA to stabilize it, and thus to prevent its denaturation under extreme environmental conditions. This is DNA-binding protein HU (hup) from Thermotoga maritima (strain ATCC 43589 / DSM 3109 / JCM 10099 / NBRC 100826 / MSB8).